The sequence spans 77 residues: Protein NS4 (77 aa).

The protein resides in the host cytoplasm. It is found in the host nucleus. The protein localises to the host nucleolus. Its function is as follows. May function as a nucleic acid binding protein that modulates transcription of genes participating in the IFN response. This chain is Protein NS4 (Segment-9), found in Antilocapra americana (Pronghorn).